A 202-amino-acid chain; its full sequence is LexA repressor (202 aa).

The H-T-H motif DNA-binding region spans Arg28–Lys48. Catalysis depends on for autocatalytic cleavage activity residues Ser119 and Lys156.

This sequence belongs to the peptidase S24 family. In terms of assembly, homodimer.

It catalyses the reaction Hydrolysis of Ala-|-Gly bond in repressor LexA.. Represses a number of genes involved in the response to DNA damage (SOS response), including recA and lexA. Binds to the 16 bp palindromic sequence 5'-CTGTATATATATACAG-3'. In the presence of single-stranded DNA, RecA interacts with LexA causing an autocatalytic cleavage which disrupts the DNA-binding part of LexA, leading to derepression of the SOS regulon and eventually DNA repair. In Sodalis glossinidius (strain morsitans), this protein is LexA repressor.